The primary structure comprises 597 residues: tRNA uridine 5-carboxymethylaminomethyl modification enzyme MnmG (597 aa).

10–15 is an FAD binding site; sequence GGGHAG. NAD(+) is bound at residue 267–281; the sequence is GPRYCPSIEDKVVRF.

The protein belongs to the MnmG family. In terms of assembly, homodimer. Heterotetramer of two MnmE and two MnmG subunits. FAD serves as cofactor.

The protein localises to the cytoplasm. Functionally, NAD-binding protein involved in the addition of a carboxymethylaminomethyl (cmnm) group at the wobble position (U34) of certain tRNAs, forming tRNA-cmnm(5)s(2)U34. The protein is tRNA uridine 5-carboxymethylaminomethyl modification enzyme MnmG of Thermus thermophilus (strain ATCC BAA-163 / DSM 7039 / HB27).